A 180-amino-acid polypeptide reads, in one-letter code: Large ribosomal subunit protein uL5 (180 aa).

It belongs to the universal ribosomal protein uL5 family. In terms of assembly, part of the 50S ribosomal subunit; part of the 5S rRNA/L5/L18/L25 subcomplex. Contacts the 5S rRNA and the P site tRNA. Forms a bridge to the 30S subunit in the 70S ribosome.

Functionally, this is one of the proteins that bind and probably mediate the attachment of the 5S RNA into the large ribosomal subunit, where it forms part of the central protuberance. In the 70S ribosome it contacts protein S13 of the 30S subunit (bridge B1b), connecting the 2 subunits; this bridge is implicated in subunit movement. Contacts the P site tRNA; the 5S rRNA and some of its associated proteins might help stabilize positioning of ribosome-bound tRNAs. The protein is Large ribosomal subunit protein uL5 of Lactiplantibacillus plantarum (strain ATCC BAA-793 / NCIMB 8826 / WCFS1) (Lactobacillus plantarum).